We begin with the raw amino-acid sequence, 360 residues long: Protein phosphatase methylesterase 1 (360 aa).

The segment at 26–50 (DEDDIPEPAVMPPTGNSSSTANTED) is disordered. Active-site residues include serine 167, aspartate 192, and histidine 316.

It belongs to the AB hydrolase superfamily.

It carries out the reaction [phosphatase 2A protein]-C-terminal L-leucine methyl ester + H2O = [phosphatase 2A protein]-C-terminal L-leucine + methanol + H(+). Functionally, demethylates proteins that have been reversibly carboxymethylated. Demethylates the phosphatase PP2A catalytic subunit. Involved in the regulation of filamentous growth. The sequence is that of Protein phosphatase methylesterase 1 (PPE1) from Candida albicans (strain SC5314 / ATCC MYA-2876) (Yeast).